A 451-amino-acid chain; its full sequence is Enolase (451 aa).

Position 167 (Gln-167) interacts with (2R)-2-phosphoglycerate. The active-site Proton donor is Glu-209. Positions 250, 307, and 334 each coordinate Mg(2+). The (2R)-2-phosphoglycerate site is built by Lys-359, Arg-388, Ser-389, and Lys-410. Catalysis depends on Lys-359, which acts as the Proton acceptor.

The protein belongs to the enolase family. The cofactor is Mg(2+).

The protein resides in the cytoplasm. It is found in the secreted. The protein localises to the cell surface. It catalyses the reaction (2R)-2-phosphoglycerate = phosphoenolpyruvate + H2O. It functions in the pathway carbohydrate degradation; glycolysis; pyruvate from D-glyceraldehyde 3-phosphate: step 4/5. Functionally, catalyzes the reversible conversion of 2-phosphoglycerate (2-PG) into phosphoenolpyruvate (PEP). It is essential for the degradation of carbohydrates via glycolysis. The polypeptide is Enolase (Mesomycoplasma hyopneumoniae (strain J / ATCC 25934 / NCTC 10110) (Mycoplasma hyopneumoniae)).